Consider the following 195-residue polypeptide: Imidazoleglycerol-phosphate dehydratase (195 aa).

Belongs to the imidazoleglycerol-phosphate dehydratase family.

It localises to the cytoplasm. It catalyses the reaction D-erythro-1-(imidazol-4-yl)glycerol 3-phosphate = 3-(imidazol-4-yl)-2-oxopropyl phosphate + H2O. It participates in amino-acid biosynthesis; L-histidine biosynthesis; L-histidine from 5-phospho-alpha-D-ribose 1-diphosphate: step 6/9. In Pelobacter propionicus (strain DSM 2379 / NBRC 103807 / OttBd1), this protein is Imidazoleglycerol-phosphate dehydratase.